The chain runs to 145 residues: uncharacterized protein (145 aa).

A disordered region spans residues 1-59 (MSTGTPHYAADRSKSRKSNNNRSIPFRTPTTQKVVKTSIRLGPVNPPTPTRNTQGGHGF).

This is an uncharacterized protein from Caenorhabditis elegans.